The primary structure comprises 243 residues: Orotidine 5'-phosphate decarboxylase (243 aa).

Residues aspartate 18, lysine 39, 66-75, threonine 130, arginine 192, glutamine 201, glycine 221, and arginine 222 contribute to the substrate site; that span reads DLKFHDIPTT. Catalysis depends on lysine 68, which acts as the Proton donor.

The protein belongs to the OMP decarboxylase family. Type 1 subfamily. As to quaternary structure, homodimer.

The enzyme catalyses orotidine 5'-phosphate + H(+) = UMP + CO2. The protein operates within pyrimidine metabolism; UMP biosynthesis via de novo pathway; UMP from orotate: step 2/2. Its function is as follows. Catalyzes the decarboxylation of orotidine 5'-monophosphate (OMP) to uridine 5'-monophosphate (UMP). The sequence is that of Orotidine 5'-phosphate decarboxylase from Synechococcus sp. (strain CC9311).